The following is a 553-amino-acid chain: Glucose-6-phosphate isomerase (553 aa).

The active-site Proton donor is the E355. Active-site residues include H386 and K513.

It belongs to the GPI family.

Its subcellular location is the cytoplasm. The catalysed reaction is alpha-D-glucose 6-phosphate = beta-D-fructose 6-phosphate. The protein operates within carbohydrate biosynthesis; gluconeogenesis. It functions in the pathway carbohydrate degradation; glycolysis; D-glyceraldehyde 3-phosphate and glycerone phosphate from D-glucose: step 2/4. In terms of biological role, catalyzes the reversible isomerization of glucose-6-phosphate to fructose-6-phosphate. The polypeptide is Glucose-6-phosphate isomerase (Baumannia cicadellinicola subsp. Homalodisca coagulata).